A 572-amino-acid polypeptide reads, in one-letter code: 2-succinyl-5-enolpyruvyl-6-hydroxy-3-cyclohexene-1-carboxylate synthase (572 aa).

The protein belongs to the TPP enzyme family. MenD subfamily. Homodimer. Requires Mg(2+) as cofactor. The cofactor is Mn(2+). Thiamine diphosphate is required as a cofactor.

It carries out the reaction isochorismate + 2-oxoglutarate + H(+) = 5-enolpyruvoyl-6-hydroxy-2-succinyl-cyclohex-3-ene-1-carboxylate + CO2. The protein operates within quinol/quinone metabolism; 1,4-dihydroxy-2-naphthoate biosynthesis; 1,4-dihydroxy-2-naphthoate from chorismate: step 2/7. It functions in the pathway quinol/quinone metabolism; menaquinone biosynthesis. Its function is as follows. Catalyzes the thiamine diphosphate-dependent decarboxylation of 2-oxoglutarate and the subsequent addition of the resulting succinic semialdehyde-thiamine pyrophosphate anion to isochorismate to yield 2-succinyl-5-enolpyruvyl-6-hydroxy-3-cyclohexene-1-carboxylate (SEPHCHC). The sequence is that of 2-succinyl-5-enolpyruvyl-6-hydroxy-3-cyclohexene-1-carboxylate synthase from Vibrio campbellii (strain ATCC BAA-1116).